The chain runs to 964 residues: A-type ATP synthase subunit A (964 aa).

Positions 392–518 (FLGYLMANGT…LSYLFAKLGI (127 aa)) constitute a DOD-type homing endonuclease domain.

This sequence belongs to the ATPase alpha/beta chains family. As to quaternary structure, has multiple subunits with at least A(3), B(3), C, D, E, F, H, I and proteolipid K(x). This protein undergoes a protein self splicing that involves a post-translational excision of the VDE intervening region (intein) followed by peptide ligation.

The protein resides in the cell membrane. It carries out the reaction ATP + H2O + 4 H(+)(in) = ADP + phosphate + 5 H(+)(out). Its function is as follows. Component of the A-type ATP synthase that produces ATP from ADP in the presence of a proton gradient across the membrane. The A chain is the catalytic subunit. The sequence is that of A-type ATP synthase subunit A from Pyrococcus horikoshii (strain ATCC 700860 / DSM 12428 / JCM 9974 / NBRC 100139 / OT-3).